Reading from the N-terminus, the 115-residue chain is Aspartate 1-decarboxylase (115 aa).

Catalysis depends on S25, which acts as the Schiff-base intermediate with substrate; via pyruvic acid. S25 is modified (pyruvic acid (Ser)). T57 contributes to the substrate binding site. Y58 (proton donor) is an active-site residue. 72 to 74 (GAA) contributes to the substrate binding site.

This sequence belongs to the PanD family. As to quaternary structure, heterooctamer of four alpha and four beta subunits. Requires pyruvate as cofactor. In terms of processing, is synthesized initially as an inactive proenzyme, which is activated by self-cleavage at a specific serine bond to produce a beta-subunit with a hydroxyl group at its C-terminus and an alpha-subunit with a pyruvoyl group at its N-terminus.

The protein resides in the cytoplasm. The catalysed reaction is L-aspartate + H(+) = beta-alanine + CO2. It functions in the pathway cofactor biosynthesis; (R)-pantothenate biosynthesis; beta-alanine from L-aspartate: step 1/1. In terms of biological role, catalyzes the pyruvoyl-dependent decarboxylation of aspartate to produce beta-alanine. The sequence is that of Aspartate 1-decarboxylase from Campylobacter fetus subsp. fetus (strain 82-40).